The sequence spans 495 residues: Transcription termination/antitermination protein NusA (495 aa).

The 66-residue stretch at 135 to 200 (GEIITGVVKK…RGAQLFVTRS (66 aa)) folds into the S1 motif domain. The KH domain maps to 302–368 (KHTMDIAVEA…FTKYLDIDED (67 aa)). 2 consecutive repeat copies span residues 364-414 (DIDE…KNAL) and 439-489 (GVDR…RNIC). Residues 364–489 (DIDEDFATVL…ALIMAARNIC (126 aa)) are 2 X 51 AA approximate repeats.

It belongs to the NusA family. As to quaternary structure, monomer. Binds directly to the core enzyme of the DNA-dependent RNA polymerase and to nascent RNA.

It localises to the cytoplasm. In terms of biological role, participates in both transcription termination and antitermination. This chain is Transcription termination/antitermination protein NusA, found in Shigella flexneri.